Here is a 374-residue protein sequence, read N- to C-terminus: UDP-N-acetylglucosamine--N-acetylmuramyl-(pentapeptide) pyrophosphoryl-undecaprenol N-acetylglucosamine transferase (374 aa).

UDP-N-acetyl-alpha-D-glucosamine is bound by residues 13–15, Asn-124, Arg-165, Ser-193, and Gln-294; that span reads TGG.

Belongs to the glycosyltransferase 28 family. MurG subfamily.

It is found in the cell inner membrane. The enzyme catalyses di-trans,octa-cis-undecaprenyl diphospho-N-acetyl-alpha-D-muramoyl-L-alanyl-D-glutamyl-meso-2,6-diaminopimeloyl-D-alanyl-D-alanine + UDP-N-acetyl-alpha-D-glucosamine = di-trans,octa-cis-undecaprenyl diphospho-[N-acetyl-alpha-D-glucosaminyl-(1-&gt;4)]-N-acetyl-alpha-D-muramoyl-L-alanyl-D-glutamyl-meso-2,6-diaminopimeloyl-D-alanyl-D-alanine + UDP + H(+). The protein operates within cell wall biogenesis; peptidoglycan biosynthesis. Its function is as follows. Cell wall formation. Catalyzes the transfer of a GlcNAc subunit on undecaprenyl-pyrophosphoryl-MurNAc-pentapeptide (lipid intermediate I) to form undecaprenyl-pyrophosphoryl-MurNAc-(pentapeptide)GlcNAc (lipid intermediate II). This chain is UDP-N-acetylglucosamine--N-acetylmuramyl-(pentapeptide) pyrophosphoryl-undecaprenol N-acetylglucosamine transferase, found in Rhizobium meliloti (strain 1021) (Ensifer meliloti).